The sequence spans 465 residues: GTPase Der (465 aa).

2 EngA-type G domains span residues 3–167 (PLVA…PERG) and 179–352 (IHIA…VSAL). GTP-binding positions include 9–16 (GRPNVGKS), 57–61 (DTGGM), 119–122 (NKID), 185–192 (GRPNVGKS), 232–236 (DTAGL), and 297–300 (NKWD). The 85-residue stretch at 353–437 (RQFSTSEVNK…PVRFLFREGD (85 aa)) folds into the KH-like domain.

The protein belongs to the TRAFAC class TrmE-Era-EngA-EngB-Septin-like GTPase superfamily. EngA (Der) GTPase family. Associates with the 50S ribosomal subunit.

Its function is as follows. GTPase that plays an essential role in the late steps of ribosome biogenesis. The sequence is that of GTPase Der from Xylella fastidiosa (strain 9a5c).